A 141-amino-acid chain; its full sequence is Hemoglobin subunit alpha-D (141 aa).

The Globin domain occupies 1–141 (MLTADDKKLL…VAAVLAEKYR (141 aa)). Residues His-58 and His-87 each contribute to the heme b site.

Belongs to the globin family. Heterotetramer of two alpha-D chains and two beta chains. As to expression, red blood cells.

Functionally, involved in oxygen transport from the lung to the various peripheral tissues. This chain is Hemoglobin subunit alpha-D (HBAD), found in Chloephaga melanoptera (Andean goose).